The chain runs to 317 residues: Integrin-binding sialoprotein (317 aa).

The N-terminal stretch at Met1–Ala16 is a signal peptide. Phosphoserine occurs at positions 31, 67, 74, 75, 94, and 100. Positions Phe58 to Thr254 are disordered. The segment covering Ser66–Ala102 has biased composition (acidic residues). An N-linked (GlcNAc...) asparagine glycan is attached at Asn104. Thr119 and Thr122 each carry an O-linked (GalNAc...) threonine glycan. Phosphoserine is present on Ser149. Residues Ser149 to Glu173 are compositionally biased toward acidic residues. Residues Asn177, Asn182, and Asn190 are each glycosylated (N-linked (GlcNAc...) asparagine). A compositionally biased stretch (polar residues) spans Lys222 to Asn232. Residues Thr227, Thr228, Thr229, Thr238, and Thr239 are each glycosylated (O-linked (GalNAc...) threonine). At Ser280 the chain carries Phosphoserine. The Integrin-binding motif motif lies at Arg286–Asp288. Tyr313 and Tyr314 each carry sulfotyrosine.

In terms of assembly, monomer. Interacts with integrins; the interaction promotes cell adhesion. In terms of processing, N-glycosylated; glycans consist of sialylated and core-fucosylated bi-, tri- and tetraantennary chains. Post-translationally, O-glycosylated at eight sites; mucin-type glycans contain Gal, GlcNAc, GalNAc and terminal NeuAc. Expressed in bone (at protein level). Expressed in trophoblast cells of placenta (at protein level). Expressed in brain.

It localises to the secreted. In terms of biological role, binds tightly to hydroxyapatite. Appears to form an integral part of the mineralized matrix. Probably important to cell-matrix interaction. Promotes adhesion and migration of various cells via the alpha-V/beta-3 integrin receptor (ITGAV:ITGB3). This chain is Integrin-binding sialoprotein (IBSP), found in Homo sapiens (Human).